Here is a 129-residue protein sequence, read N- to C-terminus: Small ribosomal subunit protein uS11 (129 aa).

It belongs to the universal ribosomal protein uS11 family. Part of the 30S ribosomal subunit. Interacts with proteins S7 and S18. Binds to IF-3.

Its function is as follows. Located on the platform of the 30S subunit, it bridges several disparate RNA helices of the 16S rRNA. Forms part of the Shine-Dalgarno cleft in the 70S ribosome. In Vibrio atlanticus (strain LGP32) (Vibrio splendidus (strain Mel32)), this protein is Small ribosomal subunit protein uS11.